The sequence spans 993 residues: Mediator of RNA polymerase II transcription subunit 24 (993 aa).

2 positions are modified to phosphoserine: Ser827 and Ser829.

Belongs to the Mediator complex subunit 24 family. Component of the Mediator complex, which includes at least CDK8, MED4, MED6, MED11, MED14, MED17, MED18, MED20, MED21, MED22, MED27, MED28, MED30 and MED31.

It localises to the nucleus. Component of the Mediator complex, a coactivator involved in the regulated transcription of nearly all RNA polymerase II-dependent genes. Mediator functions as a bridge to convey information from gene-specific regulatory proteins to the basal RNA polymerase II transcription machinery. Mediator is recruited to promoters by direct interactions with regulatory proteins and serves as a scaffold for the assembly of a functional preinitiation complex with RNA polymerase II and the general transcription factors. Required for activated transcription of the MtnA, MtnB and MtnD genes. This Drosophila melanogaster (Fruit fly) protein is Mediator of RNA polymerase II transcription subunit 24 (MED24).